The chain runs to 187 residues: Isopentenyl-diphosphate Delta-isomerase (187 aa).

The Mn(2+) site is built by histidine 36, histidine 43, and histidine 80. Residues 41 to 178 (VRHRAFTALL…RQLRLCPWFE (138 aa)) form the Nudix hydrolase domain. Glutamate 98 lines the Mg(2+) pocket. Positions 127 and 129 each coordinate Mn(2+). The active site involves glutamate 129.

It belongs to the IPP isomerase type 1 family. Mg(2+) is required as a cofactor. It depends on Mn(2+) as a cofactor.

It is found in the cytoplasm. It catalyses the reaction isopentenyl diphosphate = dimethylallyl diphosphate. It participates in isoprenoid biosynthesis; dimethylallyl diphosphate biosynthesis; dimethylallyl diphosphate from isopentenyl diphosphate: step 1/1. Catalyzes the 1,3-allylic rearrangement of the homoallylic substrate isopentenyl (IPP) to its highly electrophilic allylic isomer, dimethylallyl diphosphate (DMAPP). The protein is Isopentenyl-diphosphate Delta-isomerase of Haloarcula marismortui (strain ATCC 43049 / DSM 3752 / JCM 8966 / VKM B-1809) (Halobacterium marismortui).